We begin with the raw amino-acid sequence, 257 residues long: MNQLNHPYHLVNISPWPLATGMGAFAMTSGLVKWFHSFDSMLFFTGINNNHICFDQWWRDVSREATFQGMHSTKVGFGLRWGMILFIISEVFFFVSFFWGFFHSSLSPNIEVGALWPPSEVESFLSALLNTSILLASGVTVTWAHHALMENNFDQCLQGLLFTVLLGLYFSFLQGLEYMEASFTIADSIYGSTFFLATGFHGLHVLIGTIFLMICILRHAKCYFSQHHFGFEAAAWYWHFVDVVWLFLYLSIYWWGE.

Helical transmembrane passes span 15 to 35 (PWPL…VKWF), 82 to 102 (GMIL…WGFF), 124 to 144 (FLSA…VTWA), 156 to 176 (CLQG…LQGL), 194 to 214 (FFLA…FLMI), and 235 to 255 (AWYW…IYWW).

It belongs to the cytochrome c oxidase subunit 3 family. In terms of assembly, component of the cytochrome c oxidase (complex IV, CIV), a multisubunit enzyme composed of a catalytic core of 3 subunits and several supernumerary subunits. The complex exists as a monomer or a dimer and forms supercomplexes (SCs) in the inner mitochondrial membrane with ubiquinol-cytochrome c oxidoreductase (cytochrome b-c1 complex, complex III, CIII).

It is found in the mitochondrion inner membrane. It carries out the reaction 4 Fe(II)-[cytochrome c] + O2 + 8 H(+)(in) = 4 Fe(III)-[cytochrome c] + 2 H2O + 4 H(+)(out). Functionally, component of the cytochrome c oxidase, the last enzyme in the mitochondrial electron transport chain which drives oxidative phosphorylation. The respiratory chain contains 3 multisubunit complexes succinate dehydrogenase (complex II, CII), ubiquinol-cytochrome c oxidoreductase (cytochrome b-c1 complex, complex III, CIII) and cytochrome c oxidase (complex IV, CIV), that cooperate to transfer electrons derived from NADH and succinate to molecular oxygen, creating an electrochemical gradient over the inner membrane that drives transmembrane transport and the ATP synthase. Cytochrome c oxidase is the component of the respiratory chain that catalyzes the reduction of oxygen to water. Electrons originating from reduced cytochrome c in the intermembrane space (IMS) are transferred via the dinuclear copper A center (CU(A)) of subunit 2 and heme A of subunit 1 to the active site in subunit 1, a binuclear center (BNC) formed by heme A3 and copper B (CU(B)). The BNC reduces molecular oxygen to 2 water molecules using 4 electrons from cytochrome c in the IMS and 4 protons from the mitochondrial matrix. The polypeptide is Cytochrome c oxidase subunit 3 (COIII) (Artemia franciscana (Brine shrimp)).